Reading from the N-terminus, the 332-residue chain is 2,3-diketo-L-gulonate reductase (332 aa).

The active-site Proton donor is His-44. NAD(+) is bound by residues 168 to 174 (ITMVDMS), 224 to 225 (WK), and 304 to 306 (GHE).

The protein belongs to the LDH2/MDH2 oxidoreductase family. DlgD subfamily. As to quaternary structure, homodimer.

It is found in the cytoplasm. The enzyme catalyses 3-dehydro-L-gulonate + NAD(+) = 2,3-dioxo-L-gulonate + NADH + H(+). It carries out the reaction 3-dehydro-L-gulonate + NADP(+) = 2,3-dioxo-L-gulonate + NADPH + H(+). Functionally, catalyzes the reduction of 2,3-diketo-L-gulonate in the presence of NADH, to form 3-keto-L-gulonate. In Escherichia coli O8 (strain IAI1), this protein is 2,3-diketo-L-gulonate reductase.